A 350-amino-acid chain; its full sequence is tRNA uridine(34) hydroxylase (350 aa).

The 95-residue stretch at Asp-146–Leu-240 folds into the Rhodanese domain. Cys-200 (cysteine persulfide intermediate) is an active-site residue.

Belongs to the TrhO family.

The enzyme catalyses uridine(34) in tRNA + AH2 + O2 = 5-hydroxyuridine(34) in tRNA + A + H2O. In terms of biological role, catalyzes oxygen-dependent 5-hydroxyuridine (ho5U) modification at position 34 in tRNAs, the first step in 5-carboxymethoxyuridine (cmo5U) biosynthesis. May be part of an alternate pathway, which is able to bypass cmo5U biogenesis in a subset of tRNAs under aerobic conditions. This is tRNA uridine(34) hydroxylase from Escherichia coli (strain SE11).